A 382-amino-acid chain; its full sequence is MRLHEYQAKQVFADAGIPTPASQLAETVDEAVDAAEEIGYPVAIKAQVHVGGRGKAGGIKLVESKEEAREAAEDIIGMDLKGYHVSKVLVEEAVDFVNELYVGVTMDRGEGRPVAMVSTKGGVNIEEVAEEDPDAIAREHIDPAFGMHPFQARKVVYEAGVDREVANDVASVLTTLYQLWDDRDGADTEINPLMITSDDEVIAADAVMNVDGDALFRQPEIAEMGEEAAEGDELEQKADEYGFDYVRLDGNVGIIGNGAGLVMTTLDLVDYYDGEPANFLDVGGGAKADRIANALDMVFSDENVDSVVFNIFGGITRGDEVANGINQALEQFDEIPKPVTVRLAGTNAEEGMEILNEDLVTVEHTLEDAVQRAVEYAKEVEA.

Residues 9-237 (KQVFADAGIP…AAEGDELEQK (229 aa)) enclose the ATP-grasp domain. ATP-binding positions include lysine 45, 52-54 (GRG), glutamate 91, valine 94, and glutamate 99. Positions 191 and 205 each coordinate Mg(2+). Substrate contacts are provided by residues asparagine 257 and 314 to 316 (GIT).

This sequence belongs to the succinate/malate CoA ligase beta subunit family. As to quaternary structure, heterotetramer of two alpha and two beta subunits. Requires Mg(2+) as cofactor.

It catalyses the reaction succinate + ATP + CoA = succinyl-CoA + ADP + phosphate. The enzyme catalyses GTP + succinate + CoA = succinyl-CoA + GDP + phosphate. It participates in carbohydrate metabolism; tricarboxylic acid cycle; succinate from succinyl-CoA (ligase route): step 1/1. Its function is as follows. Succinyl-CoA synthetase functions in the citric acid cycle (TCA), coupling the hydrolysis of succinyl-CoA to the synthesis of either ATP or GTP and thus represents the only step of substrate-level phosphorylation in the TCA. The beta subunit provides nucleotide specificity of the enzyme and binds the substrate succinate, while the binding sites for coenzyme A and phosphate are found in the alpha subunit. The protein is Succinate--CoA ligase [ADP-forming] subunit beta of Haloarcula marismortui (strain ATCC 43049 / DSM 3752 / JCM 8966 / VKM B-1809) (Halobacterium marismortui).